Consider the following 128-residue polypeptide: uncharacterized protein (128 aa).

The segment at 25–61 (LPNRLPEGSTVGPKPDSSWEAGSQGNWGLTSSGAGQD) is disordered. A compositionally biased stretch (polar residues) spans 44–61 (EAGSQGNWGLTSSGAGQD).

This is an uncharacterized protein from Homo sapiens (Human).